A 293-amino-acid polypeptide reads, in one-letter code: uncharacterized protein (293 aa).

Disordered stretches follow at residues 1–114 and 268–293; these read MFLR…IPKL and EETADWESEGQEREAKEQREGPGRML. Phosphoserine is present on residues Ser34, Ser35, and Ser89. Basic and acidic residues-rich tracts occupy residues 73 to 95 and 277 to 293; these read SSRDLKVDQLGSKRMDSLKRDKT and GQEREAKEQREGPGRML.

This is an uncharacterized protein from Mus musculus (Mouse).